Here is an 805-residue protein sequence, read N- to C-terminus: G-type lectin S-receptor-like serine/threonine-protein kinase SD1-29 (805 aa).

The first 21 residues, M1 to A21, serve as a signal peptide directing secretion. The region spanning A22–F141 is the Bulb-type lectin domain. Residues A22–K428 lie on the Extracellular side of the membrane. N24, N50, N85, N91, and N248 each carry an N-linked (GlcNAc...) asparagine glycan. The 37-residue stretch at P277 to E313 folds into the EGF-like domain. 2 cysteine pairs are disulfide-bonded: C281/C293 and C287/C301. N-linked (GlcNAc...) asparagine glycosylation is found at N319 and N378. In terms of domain architecture, PAN spans C332–S418. 2 cysteine pairs are disulfide-bonded: C371/C392 and C375/C381. Residues I429–M449 traverse the membrane as a helical segment. Over L450–R805 the chain is Cytoplasmic. The Protein kinase domain occupies F488–F773. ATP is bound by residues L494–V502 and K516. S522 and S537 each carry phosphoserine. Positions C577 to I594 are caM-binding. At Y600 the chain carries Phosphotyrosine. D613 serves as the catalytic Proton acceptor. Residues S617 and S630 each carry the phosphoserine modification. T647 is modified (phosphothreonine). A phosphoserine mark is found at S690 and S793.

It belongs to the protein kinase superfamily. Ser/Thr protein kinase family. Interacts with PUB9, PUB13, PUB14, PUB29, PUB38, PUB44 and PUB45. Interacts with PBL34, PBL35 and PBL36. In terms of processing, autophosphorylated at Tyr-600. Autophosphorylation at Tyr-600 is required for downstream phosphorylation of the receptor-like cytoplasmic kinase PBL34, PBL35 and PBL36, and activation of plant immunity.

Its subcellular location is the cell membrane. The enzyme catalyses L-seryl-[protein] + ATP = O-phospho-L-seryl-[protein] + ADP + H(+). The catalysed reaction is L-threonyl-[protein] + ATP = O-phospho-L-threonyl-[protein] + ADP + H(+). It catalyses the reaction L-tyrosyl-[protein] + ATP = O-phospho-L-tyrosyl-[protein] + ADP + H(+). S-domain receptor protein kinase involved in lipopolysaccharide (LPS) sensing. Specifically detects LPS of Pseudomonas and Xanthomonas species. LPS are major components of the outer membrane of Gram-negative bacteria and are important microbe-associated molecular patterns (MAMPs) that trigger biphasic production of reactive oxygen species (ROS) and immune responses in plants. Seems to be only partially associated with the second LPS-triggered ROS burst. Mediates defense signaling in response to the medium-chain 3-hydroxy fatty acid 3-OH-C10:0, a pathogen-associated molecular pattern (PAMP) which induces autophosphorylation at Tyr-600. Autophosphorylation at Tyr-600 is required for downstream phosphorylation of the receptor-like cytoplasmic kinase PBL34, PBL35 and PBL36, and activation of plant immunity. Functionally, (Microbial infection) Targeted by the bacterial type III effector protein tyrosine phosphatase HopAO1 from Pseudomonas syringae. HopAO1 dephosphorylates Tyr-600, which suppresses the immune response. This is G-type lectin S-receptor-like serine/threonine-protein kinase SD1-29 from Arabidopsis thaliana (Mouse-ear cress).